The primary structure comprises 99 residues: MIKINISQNFLVAKGHALFAEKGKDIVCAAISGIIFGGVAWFEPDKIEFTENKLVPSIALKLIDPTPNVAVAFSVITVQLKAIANSYPNHIVINEESYE.

Residue H16 is the Proton donor of the active site. The active-site Nucleophile is the C28.

The protein belongs to the Prp family. Homodimer.

An essential cysteine protease that cleaves the N-terminus from ribosomal protein bL27. This Mycoplasma genitalium (strain ATCC 33530 / DSM 19775 / NCTC 10195 / G37) (Mycoplasmoides genitalium) protein is Ribosomal processing cysteine protease Prp.